The primary structure comprises 230 residues: Leucyl/phenylalanyl-tRNA--protein transferase (230 aa).

Belongs to the L/F-transferase family.

The protein resides in the cytoplasm. It catalyses the reaction N-terminal L-lysyl-[protein] + L-leucyl-tRNA(Leu) = N-terminal L-leucyl-L-lysyl-[protein] + tRNA(Leu) + H(+). It carries out the reaction N-terminal L-arginyl-[protein] + L-leucyl-tRNA(Leu) = N-terminal L-leucyl-L-arginyl-[protein] + tRNA(Leu) + H(+). The catalysed reaction is L-phenylalanyl-tRNA(Phe) + an N-terminal L-alpha-aminoacyl-[protein] = an N-terminal L-phenylalanyl-L-alpha-aminoacyl-[protein] + tRNA(Phe). Functionally, functions in the N-end rule pathway of protein degradation where it conjugates Leu, Phe and, less efficiently, Met from aminoacyl-tRNAs to the N-termini of proteins containing an N-terminal arginine or lysine. In Erwinia tasmaniensis (strain DSM 17950 / CFBP 7177 / CIP 109463 / NCPPB 4357 / Et1/99), this protein is Leucyl/phenylalanyl-tRNA--protein transferase.